A 287-amino-acid polypeptide reads, in one-letter code: 4-diphosphocytidyl-2-C-methyl-D-erythritol kinase (287 aa).

Lys-12 is a catalytic residue. 95–105 (PAQAGMGGGSS) contacts ATP. Residue Asp-137 is part of the active site.

The protein belongs to the GHMP kinase family. IspE subfamily.

The catalysed reaction is 4-CDP-2-C-methyl-D-erythritol + ATP = 4-CDP-2-C-methyl-D-erythritol 2-phosphate + ADP + H(+). It functions in the pathway isoprenoid biosynthesis; isopentenyl diphosphate biosynthesis via DXP pathway; isopentenyl diphosphate from 1-deoxy-D-xylulose 5-phosphate: step 3/6. Catalyzes the phosphorylation of the position 2 hydroxy group of 4-diphosphocytidyl-2C-methyl-D-erythritol. The sequence is that of 4-diphosphocytidyl-2-C-methyl-D-erythritol kinase from Delftia acidovorans (strain DSM 14801 / SPH-1).